The primary structure comprises 392 residues: DNA primase small subunit PriS (392 aa).

Catalysis depends on residues Asp-98, Asp-100, and Asp-295.

It belongs to the eukaryotic-type primase small subunit family. Heterodimer of a small subunit (PriS) and a large subunit (PriL). Mg(2+) is required as a cofactor. Requires Mn(2+) as cofactor.

In terms of biological role, catalytic subunit of DNA primase, an RNA polymerase that catalyzes the synthesis of short RNA molecules used as primers for DNA polymerase during DNA replication. The small subunit contains the primase catalytic core and has DNA synthesis activity on its own. Binding to the large subunit stabilizes and modulates the activity, increasing the rate of DNA synthesis while decreasing the length of the DNA fragments, and conferring RNA synthesis capability. The DNA polymerase activity may enable DNA primase to also catalyze primer extension after primer synthesis. May also play a role in DNA repair. The chain is DNA primase small subunit PriS from Haloarcula marismortui (strain ATCC 43049 / DSM 3752 / JCM 8966 / VKM B-1809) (Halobacterium marismortui).